The following is a 150-amino-acid chain: MNTCIQLLILCLVTVINSENSTDNSTENTIKNETENATETELPETFENETENVSETELPEIIENETKIEALNLPQIPKQKYCRTEGQYCSRTYFHRCCGNLVCQLHGFFNGTCVQCLAERKFCIWSSECCSKRCRLFRCRKNPYVQVIPY.

The signal sequence occupies residues 1-18 (MNTCIQLLILCLVTVINS). Asparagine 20, asparagine 24, asparagine 32, asparagine 36, asparagine 48, asparagine 52, asparagine 64, and asparagine 110 each carry an N-linked (GlcNAc...) asparagine glycan. The segment at 22 to 49 (TDNSTENTIKNETENATETELPETFENE) is disordered. Over residues 36–49 (NATETELPETFENE) the composition is skewed to acidic residues. Disulfide bonds link cysteine 116/cysteine 130, cysteine 123/cysteine 134, and cysteine 129/cysteine 139.

The protein belongs to the UPF0506 family.

The protein localises to the secreted. The polypeptide is UPF0506 protein SJCHGC02381 (Schistosoma japonicum (Blood fluke)).